The chain runs to 158 residues: UPF0178 protein Rpal_2485 (158 aa).

It belongs to the UPF0178 family.

In Rhodopseudomonas palustris (strain TIE-1), this protein is UPF0178 protein Rpal_2485.